The primary structure comprises 239 residues: 2,3,4,5-tetrahydropyridine-2,6-dicarboxylate N-acetyltransferase (239 aa).

It belongs to the transferase hexapeptide repeat family. DapH subfamily.

It carries out the reaction (S)-2,3,4,5-tetrahydrodipicolinate + acetyl-CoA + H2O = L-2-acetamido-6-oxoheptanedioate + CoA. Its pathway is amino-acid biosynthesis; L-lysine biosynthesis via DAP pathway; LL-2,6-diaminopimelate from (S)-tetrahydrodipicolinate (acetylase route): step 1/3. Catalyzes the transfer of an acetyl group from acetyl-CoA to tetrahydrodipicolinate. The polypeptide is 2,3,4,5-tetrahydropyridine-2,6-dicarboxylate N-acetyltransferase (Staphylococcus carnosus (strain TM300)).